The primary structure comprises 214 residues: Type IV major pilin protein PilE1 (214 aa).

Positions 1-7 are cleaved as a propeptide — leader sequence; it reads MNTLQKG. An N-methylphenylalanine modification is found at F8. The helical transmembrane segment at 8–28 threads the bilayer; it reads FTLIELMIVIAIVGILAAVAL. A disulfide bond links C127 and C161. Positions 182–214 are disordered; that stretch reads AGTDAVTADTTGKDKEIDTKHLPSTCRDKSSAE. The segment covering 192–214 has biased composition (basic and acidic residues); it reads TGKDKEIDTKHLPSTCRDKSSAE.

Belongs to the N-Me-Phe pilin family. In terms of assembly, the pili are polar flexible filaments of about 5.4 nanometers diameter and 2.5 micrometers average length; they consist of only a single polypeptide chain arranged in a helical configuration of five subunits per turn in the assembled pilus.

Its subcellular location is the fimbrium. It localises to the membrane. Major component of the type IV pilus (T4P) that plays a role in cellular adherence, microcolony formation, resistance to neutrophil mediated killing, twitching motility as well as transformation. Mediates the attachment and the formation of bacterial microcolonies on host epithelial cells. Mechanistically, pili retractation induces host NF-kappa-B activation in infected cells, which is temporally associated with the formation of gonococcal microcolonies. The sequence is that of Type IV major pilin protein PilE1 (pilE1) from Neisseria gonorrhoeae.